Consider the following 810-residue polypeptide: Hemoglobin-haptoglobin utilization protein B (810 aa).

The signal sequence occupies residues 1-22 (MPIPFKPVLAVAAIAQAFPAFA). One can recognise a TBDR plug domain in the interval 34 to 166 (NEITVTGTHK…LGGAVNYQTK (133 aa)). Positions 175–810 (DKPYHLGIKG…SYNFTIEAKF (636 aa)) constitute a TBDR beta-barrel domain. Residues 793–810 (QRFTSPGRSYNFTIEAKF) carry the TonB C-terminal box motif.

It belongs to the TonB-dependent receptor family.

The protein localises to the cell outer membrane. Acts as a receptor for hemoglobin or the hemoglobin/haptoglobin complex and is required for heme uptake. The sequence is that of Hemoglobin-haptoglobin utilization protein B (hpuB) from Neisseria meningitidis serogroup C.